A 532-amino-acid chain; its full sequence is Protein DETOXIFICATION 51 (532 aa).

Transmembrane regions (helical) follow at residues 65–85 (FPIA…MFFL), 98–118 (LAIA…ALGM), 142–162 (VVFL…VGKI), 176–196 (AQTY…LHPI), 208–228 (PVTL…LFLV), 238–258 (VAVA…CYVW), 290–310 (VSVC…GLLV), 316–336 (VAAM…PSSL), 358–378 (LTAT…AAFA), 395–415 (ILQL…GNCP), 439–459 (AFYL…GIGF), and 461–481 (GLWV…MYVV).

This sequence belongs to the multi antimicrobial extrusion (MATE) (TC 2.A.66.1) family. In terms of tissue distribution, expressed in the meristematic regions. Mainly detected in tissues where cells were actively dividing, such as leaf primordia and young leaves, the junction between lateral root and the primary root, root cap, hydathodes, the junction between secondary inflorescence and the main inflorescence, young stamen and young siliques. Highly expressed at the junction between the hypocotyl and the root, and at the marginal areas of cotyledons and true leaves, coinciding with the locations of the hydathode. Also highly expressed at the basal regions of the newly emerged lateral roots. In the floral organs, mostly expressed at the style of the pistil.

The protein localises to the endosome membrane. Its subcellular location is the late endosome membrane. Functions as a multidrug and toxin extrusion transporter that negatively regulates plant disease resistance. Plays an important role in maintaining normal plant architecture, possibly by regulating local auxin biosynthesis. May act as a negative regulator of hypocotyl cell elongation in the light. The chain is Protein DETOXIFICATION 51 from Arabidopsis thaliana (Mouse-ear cress).